Consider the following 201-residue polypeptide: Thylakoid membrane protein slr1796 (201 aa).

Residues 16–36 (FLIVSLAFAMLLLGIWGTLPF) traverse the membrane as a helical segment.

Its subcellular location is the cellular thylakoid membrane. The protein is Thylakoid membrane protein slr1796 of Synechocystis sp. (strain ATCC 27184 / PCC 6803 / Kazusa).